The following is a 261-amino-acid chain: MDSNSSNKIVLVTGANQGLGFAVIEVAGVRYPSNTYILCARDIEKGQQAVHQLRDRGVAAIDLVELDVTNDDHIAAAVRHVEAQYGRLDVLVNNAGFVRLGHQDTNLSEMRATYNEYMNVHITSVAVVTHAFTPLLHRSPAPKVINVTSGLGSITNVLSPRRMARVPPYGASKVGMNGLTAHLQVSENERVAAGEAKAPRIRFFISNPGLLKTAFSNYIAWGKEPQAGAESIVQLMGDEEGKFDHAMQWEHEEGEMRVVPW.

Residues Leu19, Asp67, Asn94, Tyr169, Lys173, and Thr213 each coordinate NADP(+). Residue Tyr169 is the Proton donor of the active site. Catalysis depends on Lys173, which acts as the Lowers pKa of active site Tyr.

This sequence belongs to the short-chain dehydrogenases/reductases (SDR) family.

Its function is as follows. Short-chain dehydrogenase/reductase; part of the gene cluster that mediates the biosynthesis of fumigermin that inhibits germination of spores of the inducing S.rapamycinicus, and thus helps the fungus to defend resources in the shared habitat against a bacterial competitor. The partially reducing polyketide synthase fngA alone is sufficient for the production of fumigermin. FgnA catalyzes the condensation of 3 malonyl-CoA units to an acetyl-CoA starter, and 3 methylations to yield fumigermin. It is remarkable that the five cluster genes including fgnA are conserved in distantly related fungi, supporting the assumption of a fumigermin cluster; it is thus possible that originally all five genes were functional, but that the genes encoding tailoring enzymes became inactive from mutations, similar to the case of the fgnA gene in strains A1163 and Af293. This Aspergillus fumigatus (strain ATCC MYA-4609 / CBS 101355 / FGSC A1100 / Af293) (Neosartorya fumigata) protein is Short-chain dehydrogenase/reductase AFUA_1G00990.